Here is a 283-residue protein sequence, read N- to C-terminus: Shikimate dehydrogenase (NADP(+)) (283 aa).

Shikimate contacts are provided by residues 16 to 18 (SLS) and threonine 63. Catalysis depends on lysine 67, which acts as the Proton acceptor. Aspartate 79 lines the NADP(+) pocket. Shikimate-binding residues include asparagine 88 and aspartate 103. Residues 128-132 (GAGGA), alanine 223, and glycine 243 each bind NADP(+).

The protein belongs to the shikimate dehydrogenase family. As to quaternary structure, homodimer.

It catalyses the reaction shikimate + NADP(+) = 3-dehydroshikimate + NADPH + H(+). The protein operates within metabolic intermediate biosynthesis; chorismate biosynthesis; chorismate from D-erythrose 4-phosphate and phosphoenolpyruvate: step 4/7. In terms of biological role, involved in the biosynthesis of the chorismate, which leads to the biosynthesis of aromatic amino acids. Catalyzes the reversible NADPH linked reduction of 3-dehydroshikimate (DHSA) to yield shikimate (SA). This Xanthomonas campestris pv. campestris (strain 8004) protein is Shikimate dehydrogenase (NADP(+)).